The following is an 871-amino-acid chain: Metabotropic glutamate receptor 6 (871 aa).

Positions 1–23 are cleaved as a signal peptide; the sequence is MGRLPVLLLWLAWWLSQAGIACG. Topologically, residues 24–579 are extracellular; it reads AGSVRLAGGL…VVRLTWSSPW (556 aa). Cysteine 51 and cysteine 93 are joined by a disulfide. Residues serine 148, 169-171, and tyrosine 219 contribute to the L-glutamate site; that span reads AST. 7 disulfide bridges follow: cysteine 238/cysteine 530, cysteine 361/cysteine 377, cysteine 417/cysteine 424, cysteine 512/cysteine 531, cysteine 516/cysteine 534, cysteine 537/cysteine 549, and cysteine 552/cysteine 565. N-linked (GlcNAc...) asparagine glycosylation occurs at asparagine 290. Residue aspartate 301 participates in L-glutamate binding. Residue lysine 394 participates in L-glutamate binding. N-linked (GlcNAc...) asparagine glycans are attached at residues asparagine 445 and asparagine 473. Residue asparagine 561 is glycosylated (N-linked (GlcNAc...) asparagine). Residues 580-602 traverse the membrane as a helical segment; sequence AALPLLLAVLGIMATTTIMATFM. Over 603 to 616 the chain is Cytoplasmic; sequence RHNDTPIVRASGRE. Residues 617 to 637 traverse the membrane as a helical segment; that stretch reads LSYVLLTGIFLIYAITFLMVA. The Extracellular segment spans residues 638–648; the sequence is EPCAAICAARR. Residues 649-667 form a helical membrane-spanning segment; sequence LLLGLGTTLSYSALLTKTN. The Cytoplasmic segment spans residues 668–691; it reads RIYRIFEQGKRSVTPPPFISPTSQ. Residues 692–712 traverse the membrane as a helical segment; the sequence is LVITFGLTSLQVVGVIAWLGA. The Extracellular segment spans residues 713 to 742; it reads QPPHSVIDYEEQRTVDPEQARGVLKCDMSD. A helical transmembrane segment spans residues 743-764; that stretch reads LSLIGCLGYSLLLMVTCTVYAI. The Cytoplasmic segment spans residues 765–777; sequence KARGVPETFNEAK. Residues 778–800 form a helical membrane-spanning segment; the sequence is PIGFTMYTTCIIWLAFVPIFFGT. Residues 801 to 813 lie on the Extracellular side of the membrane; sequence AQSAEKIYIQTTT. A helical membrane pass occupies residues 814–839; it reads LTVSLSLSASVSLGMLYVPKTYVILF. Over 840–871 the chain is Cytoplasmic; it reads HPEQNVQKRKRSLKKTSTMAAPPQNENAEDAK. A disordered region spans residues 850–871; sequence RSLKKTSTMAAPPQNENAEDAK.

The protein belongs to the G-protein coupled receptor 3 family. As to quaternary structure, homodimer. Interacts with GPR179. Interacts with photoreceptor synaptic protein LRIT1 (via its N-terminal extracellular domain). Restricted expression in the inner nuclear layer of the retina.

It is found in the cell membrane. It localises to the endoplasmic reticulum membrane. Its subcellular location is the golgi apparatus membrane. The protein localises to the cell projection. The protein resides in the dendrite. G-protein coupled receptor for glutamate. Ligand binding causes a conformation change that triggers signaling via guanine nucleotide-binding proteins (G proteins) and modulates the activity of down-stream effectors, such as adenylate cyclase. Signaling inhibits adenylate cyclase activity. Signaling stimulates TRPM1 channel activity and Ca(2+) uptake. Required for normal vision. This Rattus norvegicus (Rat) protein is Metabotropic glutamate receptor 6 (Grm6).